The primary structure comprises 144 residues: ATP synthase epsilon chain (144 aa).

Belongs to the ATPase epsilon chain family. F-type ATPases have 2 components, CF(1) - the catalytic core - and CF(0) - the membrane proton channel. CF(1) has five subunits: alpha(3), beta(3), gamma(1), delta(1), epsilon(1). CF(0) has three main subunits: a, b and c.

It localises to the cell inner membrane. In terms of biological role, produces ATP from ADP in the presence of a proton gradient across the membrane. This Hydrogenovibrio crunogenus (strain DSM 25203 / XCL-2) (Thiomicrospira crunogena) protein is ATP synthase epsilon chain.